The primary structure comprises 436 residues: Cholecystokinin receptor type A (436 aa).

The Extracellular portion of the chain corresponds to methionine 1–serine 41. N-linked (GlcNAc...) asparagine glycans are attached at residues asparagine 10 and asparagine 24. A disulfide bridge connects residues cysteine 18 and cysteine 29. The chain crosses the membrane as a helical span at residues alanine 42–isoleucine 67. The Cytoplasmic segment spans residues arginine 68–asparagine 77. The chain crosses the membrane as a helical span at residues isoleucine 78–leucine 104. At lysine 105–lysine 115 the chain is on the extracellular side. Residues cysteine 114 and cysteine 196 are joined by a disulfide bond. A helical transmembrane segment spans residues threonine 116–leucine 137. Topologically, residues glutamate 138–histidine 157 are cytoplasmic. Residues alanine 158–isoleucine 178 traverse the membrane as a helical segment. At tyrosine 179–glutamine 210 the chain is on the extracellular side. An N-linked (GlcNAc...) asparagine glycan is attached at asparagine 190. A helical transmembrane segment spans residues threonine 211–leucine 234. Topologically, residues glutamate 235–arginine 321 are cytoplasmic. The tract at residues glutamate 252 to lysine 280 is disordered. A helical membrane pass occupies residues methionine 322 to alanine 342. Topologically, residues tryptophan 343–glycine 357 are extracellular. A helical membrane pass occupies residues threonine 358–methionine 381. Topologically, residues asparagine 382 to histidine 436 are cytoplasmic. Cysteine 395 is lipidated: S-palmitoyl cysteine.

The protein belongs to the G-protein coupled receptor 1 family.

It is found in the cell membrane. Receptor for cholecystokinin. Mediates pancreatic growth and enzyme secretion, smooth muscle contraction of the gall bladder and stomach. Has a 1000-fold higher affinity for CCK rather than for gastrin. It modulates feeding and dopamine-induced behavior in the central and peripheral nervous system. This receptor mediates its action by association with G proteins that activate a phosphatidylinositol-calcium second messenger system. This is Cholecystokinin receptor type A (Cckar) from Mus musculus (Mouse).